We begin with the raw amino-acid sequence, 866 residues long: Protein SEY1 (866 aa).

At Met1 to Gln746 the chain is on the cytoplasmic side. The 258-residue stretch at Gly48 to Ala305 folds into the GB1/RHD3-type G domain. Gly58–Ser65 provides a ligand contact to GTP. Residues Ser480–Arg506 adopt a coiled-coil conformation. The chain crosses the membrane as a helical span at residues Ile747–Leu767. Residues Arg768 to Pro770 are Lumenal-facing. Residues Val771 to Leu791 form a helical membrane-spanning segment. At Trp792–Trp866 the chain is on the cytoplasmic side. The interval Ser840 to Trp866 is disordered. Over residues Arg854 to Trp866 the composition is skewed to acidic residues.

Belongs to the TRAFAC class dynamin-like GTPase superfamily. GB1/RHD3 GTPase family. RHD3 subfamily.

The protein localises to the endoplasmic reticulum membrane. In terms of biological role, cooperates with the reticulon proteins and tubule-shaping DP1 family proteins to generate and maintain the structure of the tubular endoplasmic reticulum network. Has GTPase activity, which is required for its function in ER organization. The polypeptide is Protein SEY1 (Coccidioides immitis (strain RS) (Valley fever fungus)).